Consider the following 55-residue polypeptide: Large ribosomal subunit protein bL33 (55 aa).

The protein belongs to the bacterial ribosomal protein bL33 family.

The sequence is that of Large ribosomal subunit protein bL33 from Enterobacter sp. (strain 638).